Here is a 308-residue protein sequence, read N- to C-terminus: tRNA dimethylallyltransferase (308 aa).

14–21 (GPTASGKT) is a binding site for ATP. 16–21 (TASGKT) serves as a coordination point for substrate. Interaction with substrate tRNA stretches follow at residues 39-42 (DSAL), 163-167 (QRLSR), and 244-249 (RCVGYR).

It belongs to the IPP transferase family. As to quaternary structure, monomer. Mg(2+) serves as cofactor.

The catalysed reaction is adenosine(37) in tRNA + dimethylallyl diphosphate = N(6)-dimethylallyladenosine(37) in tRNA + diphosphate. Functionally, catalyzes the transfer of a dimethylallyl group onto the adenine at position 37 in tRNAs that read codons beginning with uridine, leading to the formation of N6-(dimethylallyl)adenosine (i(6)A). The sequence is that of tRNA dimethylallyltransferase from Shewanella baltica (strain OS185).